The sequence spans 230 residues: Osmotin-like protein PR-5x (230 aa).

The N-terminal stretch at methionine 1–alanine 25 is a signal peptide. 8 cysteine pairs are disulfide-bonded: cysteine 34–cysteine 229, cysteine 76–cysteine 86, cysteine 91–cysteine 97, cysteine 145–cysteine 217, cysteine 150–cysteine 200, cysteine 158–cysteine 168, cysteine 172–cysteine 181, and cysteine 182–cysteine 187.

This sequence belongs to the thaumatin family.

It localises to the secreted. The protein resides in the vacuole. The enzyme catalyses Endohydrolysis of (1-&gt;3)- or (1-&gt;4)-linkages in beta-D-glucans when the glucose residue whose reducing group is involved in the linkage to be hydrolyzed is itself substituted at C-3.. Its function is as follows. Antifungal protein. May bind to beta-glucans and have beta-1,3-D-glucanase activity. This chain is Osmotin-like protein PR-5x, found in Solanum lycopersicum (Tomato).